Reading from the N-terminus, the 307-residue chain is Polysialic acid O-acetyltransferase (307 aa).

Positions 1–90 (MLRLKTQDSR…LKTQDSRLKT (90 aa)) are enriched in basic and acidic residues. The tract at residues 1–95 (MLRLKTQDSR…SRLKTQDSFS (95 aa)) is disordered. Repeat copies occupy residues 3-9 (RLKTQDS), 10-16 (RLKTQDS), 17-23 (RLKTQDS), 24-30 (RLKTQDS), 31-37 (RLKTQDS), 38-44 (RLKTQDS), 45-51 (RLKTQDS), 52-58 (RLKTQDS), 59-65 (RLKTQDS), 66-72 (RLKTQDS), 73-79 (RLKTQDS), 80-86 (RLKTQDS), and 87-93 (RLKTQDS). The tract at residues 3–93 (RLKTQDSRLK…QDSRLKTQDS (91 aa)) is 13 X 7 AA tandem repeat of RLKTQDS encoded by a 7 nucleotide repeat. Acetyl-CoA contacts are provided by residues 208-210 (DGH), arginine 237, lysine 243, lysine 261, and lysine 278.

The protein belongs to the transferase hexapeptide repeat family. Homotrimer. Hexamer formed by two homotrimers.

It catalyses the reaction [N-acetyl-alpha-D-neuraminosyl-(2-&gt;8)](n) + n acetyl-CoA = [N,O(9)-diacetyl-alpha-D-neuraminosyl-(2-&gt;8)](n) + n CoA. It carries out the reaction [N-acetyl-alpha-D-neuraminosyl-(2-&gt;8)](n) + n acetyl-CoA = [O(7),N-diacetyl-alpha-D-neuraminosyl-(2-&gt;8)](n) + n CoA. Its function is as follows. Catalyzes the O-acetylation of capsular polymeric sialic acid. Shows high substrate specificity toward polymers of sialic acid that contains a large number of residues. This chain is Polysialic acid O-acetyltransferase, found in Escherichia coli O1:K1 / APEC.